The sequence spans 100 residues: Protein alpha-2 (100 aa).

The polypeptide is Protein alpha-2 (Bos taurus (Bovine)).